Reading from the N-terminus, the 165-residue chain is Transcription antitermination protein NusB (165 aa).

The tract at residues 139 to 165 (EAVRSHRRNKRPAADKPVATDKPAAAE) is disordered.

It belongs to the NusB family.

Its function is as follows. Involved in transcription antitermination. Required for transcription of ribosomal RNA (rRNA) genes. Binds specifically to the boxA antiterminator sequence of the ribosomal RNA (rrn) operons. This Laribacter hongkongensis (strain HLHK9) protein is Transcription antitermination protein NusB.